The following is a 3726-amino-acid chain: Zinc finger homeobox protein 3 (3726 aa).

2 disordered regions span residues 1–79 (MEGC…SKEV) and 95–129 (MEHHCPGTHPPPALREESASDTSEEGEEESDVENL). The C2H2-type 1 zinc-finger motif lies at 79–103 (VSCNECSASFSSLQTYMEHHCPGTH). The span at 116–126 (TSEEGEEESDV) shows a compositional bias: acidic residues. A C2H2-type 2 zinc finger spans residues 282-305 (LMCFLCKLSFGYVRSFVTHAVHDH). Positions 417–557 (SVPLGPLASS…GPASTTSNSA (141 aa)) are disordered. At serine 426 the chain carries Phosphoserine. Position 428 is a phosphothreonine (threonine 428). A compositionally biased stretch (basic and acidic residues) spans 431 to 459 (SEGKDSGAAEGDKQESGGHQDCFSEKVEP). Composition is skewed to acidic residues over residues 460-491 (AEEEEAEEEEEEEEEAEEEEEEEEEEEEEEEE) and 500-510 (DLEEELEDSPS). Residues 528–557 (SNPSISNSPLMPNVLQTLSRGPASTTSNSA) show a composition bias toward polar residues. Phosphoserine occurs at positions 535 and 573. The tract at residues 590–621 (DFADESANKDSATAPEPNESTEGDDGGFVPHH) is disordered. C2H2-type zinc fingers lie at residues 641–664 (VECPKCDTVLGSSRSLGGHMTMMH), 672–695 (LKCPKCNWHYKYQQTLEAHMKEKH), and 727–751 (FRCEVCNYSTTTKGNLSIHMQSDKH). Residues 805–829 (WRCEVCDYETNVARNLRIHMTSEKH) form a C2H2-type 6; atypical zinc finger. The C2H2-type 7; degenerate zinc finger occupies 946–969 (FQCAVCNKFTTDNLDMLGLHMNVE). A C2H2-type 8; atypical zinc finger spans residues 985–1009 (YQCKLCRYNTQLKANFQLHCKTDKH). The segment at 1041–1065 (LKCNACDYYTNSLEKLRLHTVNSRH) adopts a C2H2-type 9; atypical zinc-finger fold. The C2H2-type 10; atypical zinc finger occupies 1089 to 1113 (YHCVLCNYSTKAKLNLIQHVRSMKH). The interval 1125 to 1228 (LQKGLPEEDE…KRPKASEEIK (104 aa)) is disordered. The span at 1149-1159 (DPEEPVEDAEG) shows a compositional bias: acidic residues. Polar residues-rich tracts occupy residues 1175–1191 (GSGSEEGQSKRAASSSQ) and 1199–1217 (SPATTKRTSFPGSSETPLS). Serine 1207 carries the phosphoserine modification. The C2H2-type 11; atypical zinc-finger motif lies at 1233–1256 (YQCPYCKYSNADVNRLRVHAMTQH). The C2H2-type 12 zinc finger occupies 1262–1285 (LRCPLCQDMLNNKIHLQLHLTHLH). A disordered region spans residues 1320-1361 (DGNSTLEEVGKQPEASEDPGKNILPPASMEHGGDLKPTSADP). 3 consecutive C2H2-type zinc fingers follow at residues 1370–1395 (FLCWKKGCNQVFKTSATLQTHFNEVH), 1411–1433 (YRCNQCSLAFKTIEKLQLHSQYH), and 1439–1462 (TMCCLCQRSFRTFQALKKHLETSH). Residues 1500–1539 (EEDKEEESDLEDKQSPTGSDSGSVQEDSGSEPKRALPFRK) form a disordered region. Over residues 1514 to 1526 (SPTGSDSGSVQED) the composition is skewed to polar residues. Residues 1555–1579 (YKCTVCKESFTQKNILLVHYNSVSH) form a C2H2-type 16 zinc finger. Residue serine 1600 is modified to Phosphoserine. Residues 1606–1630 (FKCNTCNVAYSQSSTLEIHMRSVLH) form a C2H2-type 17 zinc finger. Disordered stretches follow at residues 1639 to 1678 (LEAASGNSNGTGNSGGVSLSSSTPSPVGSSGANNTFTATN), 1706 to 1738 (NPISANIASPSEPKEANRKKLADMIASRQQQQQ), and 1866 to 1943 (LSQS…PRIA). A compositionally biased stretch (low complexity) spans 1643–1669 (SGNSNGTGNSGGVSLSSSTPSPVGSSG). Residues 1717-1727 (EPKEANRKKLA) show a composition bias toward basic and acidic residues. Residues 1866-1878 (LSQSHSALLQPSQ) are compositionally biased toward low complexity. Basic and acidic residues predominate over residues 1879–1902 (HPEKKNKVVIKEKDKESQREREGP). The C2H2-type 18 zinc finger occupies 1990-2013 (LECDSCGKLFSNILILKSHQEHVH). Disordered regions lie at residues 2037-2089 (YPLR…AQPS) and 2211-2249 (NKDSPYNFSNPPITSLEELKIDSRPPSPEPQKQEYWGSK). Residues 2041 to 2066 (PQTPEPPPPPPPPPPPPLPTAPPQPA) show a composition bias toward pro residues. The segment at residues 2152–2211 (NKRPRTRITDDQLRVLRQYFDINNSPSEEQIKEMADKSGLPQKVIKHWFRNTLFKERQRN) is a DNA-binding region (homeobox 1). The span at 2214 to 2223 (SPYNFSNPPI) shows a compositional bias: polar residues. The segment at residues 2249-2308 (KRSSRTRFTDYQLRVLQDFFDANAYPKDDEFEQLSNLLNLPTRVIVVWFQNARQKARKNY) is a DNA-binding region (homeobox 2). A C2H2-type 19; atypical zinc finger spans residues 2335–2358 (YQCKKCSLVFQRIFDLIKHQKKLC). Lysine 2356 participates in a covalent cross-link: Glycyl lysine isopeptide (Lys-Gly) (interchain with G-Cter in SUMO1). Disordered stretches follow at residues 2383-2405 (TPTSSSCSTPMPSQAYSTPAPSA) and 2429-2529 (NSKA…PQQL). Over residues 2458 to 2478 (QPKPEMQQQLEQLEQKTNAPQ) the composition is skewed to low complexity. The span at 2479–2507 (PKLPQPAAPSLPQPPPQAPPPQCPLPQSS) shows a compositional bias: pro residues. Residues 2508 to 2521 (PSPSQLSHLPLKPL) are compositionally biased toward low complexity. A C2H2-type 20 zinc finger spans residues 2539 to 2561 (YQCDQCKLAFPSFEHWQEHQQLH). The Nuclear localization signal motif lies at 2624 to 2626 (KRK). The interval 2628–2656 (EEKASASPGENDSGTGGEEPQRDKRLRTT) is disordered. Position 2634 is a phosphoserine (serine 2634). The homeobox 3 DNA-binding region spans 2650-2709 (DKRLRTTITPEQLEILYQKYLLDSNPTRKMLDHIAHEVGLKKRVVQVWFQNTRARERKGQ). The C2H2-type 21 zinc-finger motif lies at 2720 to 2743 (RRCPFCRALFKAKTALEAHIRSRH). The span at 2780 to 2789 (SHLPPSSSDG) shows a compositional bias: polar residues. The segment at 2780–2805 (SHLPPSSSDGQGVPLSPVSKTMELSP) is disordered. Residues serine 2795 and serine 2804 each carry the phosphoserine modification. A Glycyl lysine isopeptide (Lys-Gly) (interchain with G-Cter in SUMO1); alternate cross-link involves residue lysine 2815. Lysine 2815 is covalently cross-linked (Glycyl lysine isopeptide (Lys-Gly) (interchain with G-Cter in SUMO2); alternate). Positions 2850–2877 (AITDTTTGDEGNADNDSATGIATETKSS) are disordered. Residues serine 2900 and serine 2904 each carry the phosphoserine modification. The segment at 2920–2955 (VDYSETSSLADPCSPSPGASGSAGKSGDGGDRPGQK) is disordered. Positions 2929-2944 (ADPCSPSPGASGSAGK) are enriched in low complexity. Positions 2952-3011 (PGQKRFRTQMTNLQLKVLKSCFNDYRTPTMLECEVLGNDIGLPKRVVQVWFQNARAKEKK) form a DNA-binding region, homeobox 4. The C2H2-type 22 zinc-finger motif lies at 3032–3056 (TECTLCGIKYSARLSVRDHIFSQQH). Disordered stretches follow at residues 3145–3274 (FTPA…AGTG) and 3415–3476 (QQQQ…SASA). Polar residues predominate over residues 3147–3156 (PANTALTSPK). The span at 3181 to 3199 (PSSASLSSPTPAQATMAMA) shows a compositional bias: low complexity. A compositionally biased stretch (pro residues) spans 3200–3221 (PQPPPQPQQPQPPVQQPPPPPA). Positions 3222–3234 (AQQIPAPQLTPQQ) are enriched in low complexity. The span at 3235–3267 (QRKDKDGEKGKEKEKAHKGKGEPLPVPKKEKGE) shows a compositional bias: basic and acidic residues. A Glycyl lysine isopeptide (Lys-Gly) (interchain with G-Cter in SUMO1) cross-link involves residue lysine 3262. At serine 3434 the chain carries Phosphoserine. Residues 3435 to 3453 (PDKDPAKESPKPEEQKNVP) show a composition bias toward basic and acidic residues. A Phosphoserine modification is found at serine 3457. A C2H2-type 23 zinc finger spans residues 3552-3576 (YHCLACESALCGEEALSQHLESALH). A disordered region spans residues 3588–3726 (AKEHPSLLPH…TSVGTDTFRL (139 aa)). Low complexity-rich tracts occupy residues 3605–3618 (STASTSQSAAHSND) and 3645–3677 (SRASAAKPPSFPPLSSSSTVTSSSCSTSGVQPS). Phosphoserine is present on serine 3616. Residue serine 3700 is modified to Phosphoserine. Over residues 3715 to 3726 (GLTSVGTDTFRL) the composition is skewed to polar residues.

As to quaternary structure, interacts with ALKBH4 and PIAS3. Interacts with FNBP3. Interacts with ESR1, RUNX3, TRIM25, SMAD2 and SMAD3. Phosphorylated at Ser-2634 in both embryonic and adult brain. Phosphorylation at Ser-1600, Ser-2795, Ser-2804, Ser-2900, Ser-3434, Ser-3616 and Ser-3700 is restricted to the embryonic brain. Hyperphosphorylation in embryonic brain protects ZFHX3 from calpain/CAPN1-mediated degradation. Post-translationally, ubiquitinated, leading to its proteasomal degradation. In terms of processing, nuclear localization is essential for its sumoylation. In terms of tissue distribution, expressed in suprachiasmatic nucleus (SCN) of the brain (at protein level). Expressed in skeletal muscle. Levels of expression are high in myoblasts but low in differentiated muscle. Expressed in the heart, primarily in the atria.

The protein localises to the nucleus. It is found in the cytoplasm. Transcriptional regulator which can act as an activator or a repressor. Inhibits the enhancer element of the AFP gene by binding to its AT-rich core sequence. In concert with SMAD-dependent TGF-beta signaling can repress the transcription of AFP via its interaction with SMAD2/3. Regulates the circadian locomotor rhythms via transcriptional activation of neuropeptidergic genes which are essential for intercellular synchrony and rhythm amplitude in the suprachiasmatic nucleus (SCN) of the brain. Regulator of myoblasts differentiation through the binding to the AT-rich sequence of MYF6 promoter and promoter repression. Down-regulates the MUC5AC promoter in gastric cancer. In association with RUNX3, up-regulates CDKN1A promoter activity following TGF-beta stimulation. This Mus musculus (Mouse) protein is Zinc finger homeobox protein 3 (Zfhx3).